The following is a 391-amino-acid chain: Isocitrate dehydrogenase [NADP] (391 aa).

The D-threo-isocitrate site is built by Ser102, Asn104, Arg108, Arg118, and Arg142. Asp283 serves as a coordination point for Mg(2+).

Belongs to the isocitrate and isopropylmalate dehydrogenases family. Homodimer. The cofactor is Mg(2+). Requires Mn(2+) as cofactor.

It catalyses the reaction D-threo-isocitrate + NADP(+) = 2-oxoglutarate + CO2 + NADPH. Functionally, catalyzes the oxidative decarboxylation of isocitrate to 2-oxoglutarate and carbon dioxide with the concomitant reduction of NADP(+). The sequence is that of Isocitrate dehydrogenase [NADP] (icd) from Streptococcus salivarius.